The primary structure comprises 159 residues: Small ribosomal subunit protein uS7 (159 aa).

This sequence belongs to the universal ribosomal protein uS7 family. In terms of assembly, part of the 30S ribosomal subunit. Contacts proteins S9 and S11.

Functionally, one of the primary rRNA binding proteins, it binds directly to 16S rRNA where it nucleates assembly of the head domain of the 30S subunit. Is located at the subunit interface close to the decoding center, probably blocks exit of the E-site tRNA. The chain is Small ribosomal subunit protein uS7 from Endomicrobium trichonymphae.